The primary structure comprises 610 residues: UvrABC system protein C (610 aa).

Positions 16–94 (SQPGVYRMYD…IKLYQPRYNV (79 aa)) constitute a GIY-YIG domain. The 36-residue stretch at 204–239 (DQVLTQLISRMETASQNLEFEEAARIRDQIQAVRRV) folds into the UVR domain.

It belongs to the UvrC family. As to quaternary structure, interacts with UvrB in an incision complex.

Its subcellular location is the cytoplasm. Its function is as follows. The UvrABC repair system catalyzes the recognition and processing of DNA lesions. UvrC both incises the 5' and 3' sides of the lesion. The N-terminal half is responsible for the 3' incision and the C-terminal half is responsible for the 5' incision. The chain is UvrABC system protein C from Escherichia coli (strain ATCC 8739 / DSM 1576 / NBRC 3972 / NCIMB 8545 / WDCM 00012 / Crooks).